The chain runs to 218 residues: Sodium channel regulatory subunit beta-1 (218 aa).

A signal peptide spans 1 to 18; sequence MGRLLALVVGAALVSSAC. Over 19 to 157 the chain is Extracellular; that stretch reads GGCVEVDSET…DKANRDMASI (139 aa). Cystine bridges form between Cys21–Cys43 and Cys40–Cys121. One can recognise an Ig-like C2-type domain in the interval 22–150; sequence VEVDSETEAV…KIHIEVVDKA (129 aa). N-linked (GlcNAc...) asparagine glycosylation is found at Asn93, Asn110, Asn114, and Asn135. The chain crosses the membrane as a helical span at residues 158–179; that stretch reads VSEIMMYVLIVVLTIWLVAEMI. Over 180–218 the chain is Cytoplasmic; that stretch reads YCYKKIAAATETAAQENASEYLAITSESKENCTGVQVAE.

Belongs to the sodium channel auxiliary subunit SCN1B (TC 8.A.17) family. Voltage-gated sodium (Nav) channel consists of an ion-conducting pore-forming alpha subunit functional on its own that is regulated by one or more beta subunits. Interacts with SCN1A; regulatory subunit of SCN1A/Nav1.1. Interacts with SCN3A; regulatory subunit of SCN3A/Nav1.3. Interacts with SCN4A; regulatory subunit of SCN4A/Nav1.4. Interacts with SCN5A; regulatory subunit of SCN5A/Nav1.5. Interacts with SCN8A; regulatory subunit of SCN8A/Nav1.6. Interacts with SCN9A; regulatory subunit of SCN9A/Nav1.7. Interacts with SCN10A; regulatory subunit of SCN10A/Nav1.8. Interacts with NFASC. Interacts with TMEM65. In terms of tissue distribution, the overall expression of isoform 1 and isoform 2 is very similar. Isoform 1 is abundantly expressed in skeletal muscle, heart and brain. Isoform 2 is highly expressed in brain and skeletal muscle and present at a very low level in heart, placenta, lung, liver, kidney and pancreas. In brain, isoform 2 is most abundant in the cerebellum, followed by the cerebral cortex and occipital lobe, while isoform 1 levels are higher in the cortex compared to the cerebellum. Isoform 2 is expressed in many regions of the brain, including cerebellar Purkinje cells, cortex pyramidal neurons and many of the neuronal fibers throughout the brain (at protein level). Also detected in dorsal root ganglion, in fibers of the spinal nerve and in cortical neurons and their processes (at protein level).

It localises to the cell membrane. Its subcellular location is the perikaryon. It is found in the cell projection. The protein localises to the axon. The protein resides in the secreted. Regulatory subunit of multiple voltage-gated sodium (Nav) channels directly mediating the depolarization of excitable membranes. Navs, also called VGSCs (voltage-gated sodium channels) or VDSCs (voltage-dependent sodium channels), operate by switching between closed and open conformations depending on the voltage difference across the membrane. In the open conformation they allow Na(+) ions to selectively pass through the pore, along their electrochemical gradient. The influx of Na+ ions provokes membrane depolarization, initiating the propagation of electrical signals throughout cells and tissues. The accessory beta subunits participate in localization and functional modulation of the Nav channels. Modulates the activity of SCN1A/Nav1.1, SCN2A/Nav1.2, SCN3A/Nav1.3, SCN4A/Nav1.4, SCN5A/Nav1.5, SCN8A/Nav1.6, SCN9A/Nav1.7 and SCN10A/Nav1.8. Its function is as follows. Cell adhesion molecule that plays a critical role in neuronal migration and pathfinding during brain development. Stimulates neurite outgrowth. Has no regulatory function on the SCN2A sodium channel complex. The protein is Sodium channel regulatory subunit beta-1 of Homo sapiens (Human).